The following is a 364-amino-acid chain: Phosphoserine aminotransferase (364 aa).

Arginine 41 provides a ligand contact to L-glutamate. Pyridoxal 5'-phosphate-binding positions include 75-76 (AS), tryptophan 100, threonine 155, aspartate 175, and glutamine 198. Lysine 199 is modified (N6-(pyridoxal phosphate)lysine). 239 to 240 (NT) contacts pyridoxal 5'-phosphate.

Belongs to the class-V pyridoxal-phosphate-dependent aminotransferase family. SerC subfamily. Homodimer. It depends on pyridoxal 5'-phosphate as a cofactor.

The protein localises to the cytoplasm. The enzyme catalyses O-phospho-L-serine + 2-oxoglutarate = 3-phosphooxypyruvate + L-glutamate. It carries out the reaction 4-(phosphooxy)-L-threonine + 2-oxoglutarate = (R)-3-hydroxy-2-oxo-4-phosphooxybutanoate + L-glutamate. Its pathway is amino-acid biosynthesis; L-serine biosynthesis; L-serine from 3-phospho-D-glycerate: step 2/3. Functionally, catalyzes the reversible conversion of 3-phosphohydroxypyruvate to phosphoserine and of 3-hydroxy-2-oxo-4-phosphonooxybutanoate to phosphohydroxythreonine. This chain is Phosphoserine aminotransferase, found in Streptococcus thermophilus (strain CNRZ 1066).